Reading from the N-terminus, the 156-residue chain is tRNA-specific adenosine deaminase (156 aa).

Residues T2–S120 enclose the CMP/dCMP-type deaminase domain. H53 lines the Zn(2+) pocket. E55 functions as the Proton donor in the catalytic mechanism. Zn(2+) is bound by residues C83 and C86.

The protein belongs to the cytidine and deoxycytidylate deaminase family. In terms of assembly, homodimer. It depends on Zn(2+) as a cofactor.

It catalyses the reaction adenosine(34) in tRNA + H2O + H(+) = inosine(34) in tRNA + NH4(+). Catalyzes the deamination of adenosine to inosine at the wobble position 34 of tRNA(Arg2). The chain is tRNA-specific adenosine deaminase from Staphylococcus aureus (strain Mu50 / ATCC 700699).